Consider the following 1062-residue polypeptide: Probable sucrose-phosphate synthase 3 (1062 aa).

The segment covering 113-122 (EREQGRRDAT) has biased composition (basic and acidic residues). Residues 113–141 (EREQGRRDATEDLSEDLSEGEKGDGLGEI) form a disordered region. Serine 126, serine 130, and serine 156 each carry phosphoserine. A disordered region spans residues 715 to 735 (MDGDKPSLNGSLEPNSADPVK).

Belongs to the glycosyltransferase 1 family. As to quaternary structure, homodimer or homotetramer.

It carries out the reaction beta-D-fructose 6-phosphate + UDP-alpha-D-glucose = sucrose 6(F)-phosphate + UDP + H(+). The protein operates within glycan biosynthesis; sucrose biosynthesis; sucrose from D-fructose 6-phosphate and UDP-alpha-D-glucose: step 1/2. With respect to regulation, activity is regulated by phosphorylation and moderated by concentration of metabolites and light. Functionally, plays a role in photosynthetic sucrose synthesis by catalyzing the rate-limiting step of sucrose biosynthesis from UDP-glucose and fructose- 6-phosphate. Involved in the regulation of carbon partitioning in the leaves of plants. May regulate the synthesis of sucrose and therefore play a major role as a limiting factor in the export of photoassimilates out of the leaf. Plays a role for sucrose availability that is essential for plant growth and fiber elongation. The chain is Probable sucrose-phosphate synthase 3 (SPS3) from Arabidopsis thaliana (Mouse-ear cress).